A 471-amino-acid polypeptide reads, in one-letter code: MKMPKTIGLVHFIGIGGIGMSGIAEVLHNLGHRVQGSDQAESANVQRLREKGIRISIGHKAENLGDAEVIVVSTAIKKDNPELIAAREKFLPVVRRAEMLAELMRFRNAIAIGGTHGKTTTTSMVAALLDAGGLDPTVINGGIINAYGTNARMGAGEWMVVEADESDGTFLKLPADIAVVTNIDPEHLDHYGSFDAVRSAFRQFVENVPFYGFGVLCLDHPEVQSMVGKIEDRKVVTYGENPQADVRFHNIRMDGATSIFDIEIRRRRTGQVIEIKDLRLPMPGRHNVSNATAAVAVAQRLGIKPEDIARGIASFGGVKRRFTLTGEWNGARIFDDYGHHPVEIKAVLRAAREACQGRIVAVHQPHRYSRLSSLFEDFTSCFNDADTILLAPVYSAGEEAIDGVNSEALVNRIKAAGHRDARHISGQEALAPVVAKIAQPGDFVVLLGAGSITYWAAALPKQLAEISGNRA.

Position 114–120 (G114–T120) interacts with ATP.

The protein belongs to the MurCDEF family.

The protein localises to the cytoplasm. It catalyses the reaction UDP-N-acetyl-alpha-D-muramate + L-alanine + ATP = UDP-N-acetyl-alpha-D-muramoyl-L-alanine + ADP + phosphate + H(+). The protein operates within cell wall biogenesis; peptidoglycan biosynthesis. Cell wall formation. The chain is UDP-N-acetylmuramate--L-alanine ligase from Sinorhizobium medicae (strain WSM419) (Ensifer medicae).